The sequence spans 508 residues: Argininosuccinate lyase (508 aa).

Belongs to the lyase 1 family. Argininosuccinate lyase subfamily.

The protein resides in the cytoplasm. It carries out the reaction 2-(N(omega)-L-arginino)succinate = fumarate + L-arginine. The protein operates within amino-acid biosynthesis; L-arginine biosynthesis; L-arginine from L-ornithine and carbamoyl phosphate: step 3/3. This chain is Argininosuccinate lyase, found in Methanopyrus kandleri (strain AV19 / DSM 6324 / JCM 9639 / NBRC 100938).